A 602-amino-acid chain; its full sequence is uncharacterized protein (602 aa).

The 160-residue stretch at 51–210 (QYLGTQPRDF…PFVSYQPDAD (160 aa)) folds into the Helicase ATP-binding domain. Over residues 430 to 439 (PHRESAHDPL) the composition is skewed to basic and acidic residues. 2 disordered regions span residues 430 to 452 (PHRESAHDPLDGDPATRTQTERG) and 518 to 538 (RAQLQKGATQPATSGASASVH). Positions 523–534 (KGATQPATSGAS) are enriched in polar residues.

This sequence to M.leprae ML1624.

This is an uncharacterized protein from Mycobacterium tuberculosis (strain ATCC 25618 / H37Rv).